A 539-amino-acid chain; its full sequence is Chaperonin GroEL 2 (539 aa).

Residues 29-32 (TLGP), 86-90 (DGTTT), Gly413, 477-479 (NAA), and Asp493 each bind ATP. The tract at residues 519-539 (VVDKPEEEDSAAAGHGHGHSH) is disordered.

This sequence belongs to the chaperonin (HSP60) family. In terms of assembly, forms a cylinder of 14 subunits composed of two heptameric rings stacked back-to-back. Interacts with the co-chaperonin GroES.

It is found in the cytoplasm. It catalyses the reaction ATP + H2O + a folded polypeptide = ADP + phosphate + an unfolded polypeptide.. Its function is as follows. Together with its co-chaperonin GroES, plays an essential role in assisting protein folding. The GroEL-GroES system forms a nano-cage that allows encapsulation of the non-native substrate proteins and provides a physical environment optimized to promote and accelerate protein folding. The protein is Chaperonin GroEL 2 of Saccharopolyspora erythraea (strain ATCC 11635 / DSM 40517 / JCM 4748 / NBRC 13426 / NCIMB 8594 / NRRL 2338).